The primary structure comprises 912 residues: Protein translocase subunit SecA (912 aa).

ATP is bound by residues glutamine 87, 105 to 109 (GEGKT), and aspartate 510. Residues 854–912 (KLRHEQASAAQAEGEGDDGQQGQQATPETFVRQERKVGRNEPCPCGSGKKYKQCCGKVS) form a disordered region. Cysteine 896, cysteine 898, cysteine 907, and cysteine 908 together coordinate Zn(2+).

Belongs to the SecA family. Monomer and homodimer. Part of the essential Sec protein translocation apparatus which comprises SecA, SecYEG and auxiliary proteins SecDF-YajC and YidC. Requires Zn(2+) as cofactor.

The protein resides in the cell inner membrane. It is found in the cytoplasm. The enzyme catalyses ATP + H2O + cellular proteinSide 1 = ADP + phosphate + cellular proteinSide 2.. Part of the Sec protein translocase complex. Interacts with the SecYEG preprotein conducting channel. Has a central role in coupling the hydrolysis of ATP to the transfer of proteins into and across the cell membrane, serving both as a receptor for the preprotein-SecB complex and as an ATP-driven molecular motor driving the stepwise translocation of polypeptide chains across the membrane. This Marinobacter nauticus (strain ATCC 700491 / DSM 11845 / VT8) (Marinobacter aquaeolei) protein is Protein translocase subunit SecA.